The chain runs to 294 residues: tRNA dimethylallyltransferase (294 aa).

Position 10-17 (10-17) interacts with ATP; the sequence is GITASGKS. Residue 12-17 participates in substrate binding; it reads TASGKS. The interval 36-39 is interaction with substrate tRNA; the sequence is DSKQ.

This sequence belongs to the IPP transferase family. As to quaternary structure, monomer. Mg(2+) is required as a cofactor.

It carries out the reaction adenosine(37) in tRNA + dimethylallyl diphosphate = N(6)-dimethylallyladenosine(37) in tRNA + diphosphate. Functionally, catalyzes the transfer of a dimethylallyl group onto the adenine at position 37 in tRNAs that read codons beginning with uridine, leading to the formation of N6-(dimethylallyl)adenosine (i(6)A). The chain is tRNA dimethylallyltransferase from Wolbachia sp. subsp. Drosophila simulans (strain wRi).